We begin with the raw amino-acid sequence, 486 residues long: Membrane-bound lytic murein transglycosylase F (486 aa).

The N-terminal stretch at 1 to 21 is a signal peptide; that stretch reads MTRIKLSYFTIGLVALLLALA. The interval 22-268 is non-LT domain; the sequence is LWPNIPWRNG…RLEEKYLGHV (247 aa). The interval 269–486 is LT domain; sequence GSFDYVDTKT…VVGPGWSIGD (218 aa). Glutamate 313 is a catalytic residue.

This sequence in the N-terminal section; belongs to the bacterial solute-binding protein 3 family. It in the C-terminal section; belongs to the transglycosylase Slt family.

The protein localises to the cell outer membrane. It catalyses the reaction Exolytic cleavage of the (1-&gt;4)-beta-glycosidic linkage between N-acetylmuramic acid (MurNAc) and N-acetylglucosamine (GlcNAc) residues in peptidoglycan, from either the reducing or the non-reducing ends of the peptidoglycan chains, with concomitant formation of a 1,6-anhydrobond in the MurNAc residue.. Its function is as follows. Murein-degrading enzyme that degrades murein glycan strands and insoluble, high-molecular weight murein sacculi, with the concomitant formation of a 1,6-anhydromuramoyl product. Lytic transglycosylases (LTs) play an integral role in the metabolism of the peptidoglycan (PG) sacculus. Their lytic action creates space within the PG sacculus to allow for its expansion as well as for the insertion of various structures such as secretion systems and flagella. This Yersinia pestis bv. Antiqua (strain Antiqua) protein is Membrane-bound lytic murein transglycosylase F.